The sequence spans 909 residues: MKPYTTLPGVAVLVSLLTQSAHAAPFPSRADVVHTREQESAARPQPIVYKHERGVSNEIQYLPPDPQGHPTIIPFPTHISYVTFNSRPGAIHPPYPHLDISEASFKAEDSTCWYRGKPCEGVPHIPIVKGFDSIEKRSPAPQRHPPAPTKATAGYQFTNCTSTSNPGPTATSPTSGIPSQPSAPPATMAGQDIFQPIAKDPIPANIKSRDDHPVKANHIENPTGPISTNKFYANFFLGNQTSTTFTHPYTMIWAKGDKNASSFGMAISHVEPSQRATGEPNNKLPGNPVRYYINPVGIKSLVLSASELKESTTMSVAKPQAFSAQAILRPTGGSSESITFPLVQGMGFITAIYNNLQPAIQSAVLFRKVEPAGSPQGGIFKYKITLEDDKNWLLYVIPENGADPKLKLEGNKLISGPTGFKGVIQVAKNPSAEEGEGIYDKSAGSYATDIKISGSVGTDGTGTYKFSFEKAGKGAPLVMYALPHHVESFDDATKNTKKNMKLSTTTKGMATACVGDSWTMVEGNLPLSMDFAPWKPGSSSQVTLSEGAKNAIKAVAGNELSQDMELQTNLNSMYFSGKGLNKFAGAIYTVQELVGDKAAASGPLNSLKESFKRFVDNKQQIPLVYDNVWKGVVSSGTYEKGDTGLDFGNTLYNDHHFHYGYFILTAAILGKLDPAWLDANKAYVNMLVRDSGNSVDNDEHFPFSRAFDWYHGHSWAKGLFESSDGKDQESTSEDTMYAYAIKMWGKTSGDKSMEARGNLMLGILARTLNNYFLMKNDNVNQPKNFIGNKVTGILFENKIDHTTYFGANLEYIQGIHMLPLLPNSAYTRSAEFVKEEWEAMFASGAAAPAEKVTGGWKGVLYANLAIIDPEASWKYFAQPSLDLSSIDGGASRIWYLAYAAGEYSTYIAL.

The first 23 residues, 1-23, serve as a signal peptide directing secretion; it reads MKPYTTLPGVAVLVSLLTQSAHA. The interval 136–187 is disordered; that stretch reads KRSPAPQRHPPAPTKATAGYQFTNCTSTSNPGPTATSPTSGIPSQPSAPPAT. The span at 155-180 shows a compositional bias: polar residues; it reads YQFTNCTSTSNPGPTATSPTSGIPSQ. N-linked (GlcNAc...) asparagine glycosylation is found at N159, N239, and N259. A beta-sandwich subdomain region spans residues 191–430; the sequence is QDIFQPIAKD…KGVIQVAKNP (240 aa). A GH81 domain is found at 191–909; the sequence is QDIFQPIAKD…AGEYSTYIAL (719 aa). Residues 431 to 524 are alpha/beta subdomain; that stretch reads SAEEGEGIYD…GDSWTMVEGN (94 aa). Residues 539 to 909 form a (alpha/beta)6 barrel subdomain region; that stretch reads SSQVTLSEGA…AGEYSTYIAL (371 aa). D654 is a catalytic residue. The (1,3-beta-D-glucosyl)n site is built by H658, D727, E729, and E733. Catalysis depends on residues E729 and E733. The interval 798 to 800 is may provide specificity for triple-helical beta-glucan; that stretch reads KID. Y811 contributes to the (1,3-beta-D-glucosyl)n binding site.

This sequence belongs to the glycosyl hydrolase 81 family.

It localises to the secreted. It is found in the cell wall. It carries out the reaction Hydrolysis of (1-&gt;3)-beta-D-glucosidic linkages in (1-&gt;3)-beta-D-glucans.. Its function is as follows. Cleaves internal linkages in 1,3-beta-glucan. Probably involved in cell separation after cytokinesis. This Arthroderma benhamiae (strain ATCC MYA-4681 / CBS 112371) (Trichophyton mentagrophytes) protein is Glucan endo-1,3-beta-D-glucosidase ARB_01444.